Here is a 316-residue protein sequence, read N- to C-terminus: Ornithine carbamoyltransferase (316 aa).

Carbamoyl phosphate contacts are provided by residues serine 57–threonine 60, glutamine 84, arginine 108, and histidine 135–glutamine 138. L-ornithine-binding positions include asparagine 166, aspartate 230, and serine 234–methionine 235. Carbamoyl phosphate-binding positions include cysteine 269–leucine 270 and arginine 297.

This sequence belongs to the aspartate/ornithine carbamoyltransferase superfamily. OTCase family.

Its subcellular location is the cytoplasm. It carries out the reaction carbamoyl phosphate + L-ornithine = L-citrulline + phosphate + H(+). It functions in the pathway amino-acid biosynthesis; L-arginine biosynthesis; L-arginine from L-ornithine and carbamoyl phosphate: step 1/3. Reversibly catalyzes the transfer of the carbamoyl group from carbamoyl phosphate (CP) to the N(epsilon) atom of ornithine (ORN) to produce L-citrulline. The sequence is that of Ornithine carbamoyltransferase from Bacillus thuringiensis subsp. konkukian (strain 97-27).